The sequence spans 388 residues: Leucine aminopeptidase 1 (388 aa).

A signal peptide spans 1 to 19 (MKSLSLLALAAIAPPAAVA). Positions 20–88 (AVVDHQVPFE…SVKSHERIQV (69 aa)) are excised as a propeptide. Asn-180 is a glycosylation site (N-linked (GlcNAc...) asparagine). His-188, Asp-207, Glu-246, and Asp-273 together coordinate Zn(2+). Cys-322 and Cys-326 are joined by a disulfide. His-355 provides a ligand contact to Zn(2+).

It belongs to the peptidase M28 family. M28E subfamily. Monomer. Zn(2+) serves as cofactor.

Its subcellular location is the secreted. Extracellular aminopeptidase that allows assimilation of proteinaceous substrates. The chain is Leucine aminopeptidase 1 (LAP1) from Coccidioides posadasii (strain RMSCC 757 / Silveira) (Valley fever fungus).